The primary structure comprises 169 residues: 3-hydroxyacyl-[acyl-carrier-protein] dehydratase FabZ (169 aa).

His74 is a catalytic residue.

It belongs to the thioester dehydratase family. FabZ subfamily.

It is found in the cytoplasm. The catalysed reaction is a (3R)-hydroxyacyl-[ACP] = a (2E)-enoyl-[ACP] + H2O. In terms of biological role, involved in unsaturated fatty acids biosynthesis. Catalyzes the dehydration of short chain beta-hydroxyacyl-ACPs and long chain saturated and unsaturated beta-hydroxyacyl-ACPs. In Gluconobacter oxydans (strain 621H) (Gluconobacter suboxydans), this protein is 3-hydroxyacyl-[acyl-carrier-protein] dehydratase FabZ.